We begin with the raw amino-acid sequence, 216 residues long: UDP-N-acetylglucosamine transferase subunit ALG14 (216 aa).

Topologically, residues 1–3 are lumenal; sequence MVC. A helical membrane pass occupies residues 4 to 24; that stretch reads VLVLAAAAGAVAVFLILRIWV. The Cytoplasmic segment spans residues 25-216; the sequence is VLRSMDVTPR…PKSVYLGRIV (192 aa).

The protein belongs to the ALG14 family. As to quaternary structure, forms with ALG13 the active heterodimeric UDP-N-acetylglucosamine transferase complex.

It localises to the endoplasmic reticulum membrane. Its function is as follows. Part of the UDP-N-acetylglucosamine transferase complex that operates in the biosynthetic pathway of dolichol-linked oligosaccharides, the glycan precursors employed in protein asparagine (N)-glycosylation. The assembly of dolichol-linked oligosaccharides begins on the cytosolic side of the endoplasmic reticulum membrane and finishes in its lumen. The sequential addition of sugars to dolichol pyrophosphate produces dolichol-linked oligosaccharides containing fourteen sugars, including two GlcNAcs, nine mannoses and three glucoses. Once assembled, the oligosaccharides are transferred from the lipid to nascent proteins by oligosaccharyltransferases. Functions as a protein-membrane adapter recruiting ALG13 at the cytoplasmic face of the endoplasmic reticulum, where the complex catalyzes the second step of dolichol pyrophosphate biosynthesis, transferring a beta1,4-linked N-acetylglucosamine (GlcNAc) from UDP-GlcNAc to GlcNAc-pyrophosphatedolichol (Gn-PDol) to produce N,N'-diacetylchitobiosyl diphosphodolichol. N,N'-diacetylchitobiosyl diphosphodolichol is a substrate for ALG1, the following enzyme in the biosynthetic pathway. The polypeptide is UDP-N-acetylglucosamine transferase subunit ALG14 (Homo sapiens (Human)).